The sequence spans 1234 residues: 1-phosphatidylinositol 4,5-bisphosphate phosphodiesterase beta-3 (1234 aa).

Position 2 is an N-acetylalanine (Ala2). The PI-PLC X-box domain occupies 315 to 466 (MDMTQPLSAY…LMGRILVKNK (152 aa)). Active-site residues include His330 and His377. A disordered region spans residues 465–586 (NKKRHRPSTG…GTASSEVNAT (122 aa)). Ser472, Ser488, Ser493, and Ser535 each carry phosphoserine. Residues 486 to 513 (EQSNSALSESSAATEPSSPQLGSPSSDS) are compositionally biased toward low complexity. The span at 554 to 566 (REDEEEDEEEEET) shows a compositional bias: acidic residues. Positions 577 to 586 (GTASSEVNAT) are enriched in polar residues. The region spanning 589 to 705 (MSTLVNYVEP…GYLLKPEFMR (117 aa)) is the PI-PLC Y-box domain. In terms of domain architecture, C2 spans 706 to 834 (RPDKSFDPFT…RNEANQPLCL (129 aa)). The span at 886 to 907 (ASTEMCQETPSQQQGSQLSSNP) shows a compositional bias: polar residues. The tract at residues 886-936 (ASTEMCQETPSQQQGSQLSSNPVPNPLDDSPRWPPGPTTSPTSTSLSSPGQ) is disordered. The segment covering 924–934 (TSPTSTSLSSP) has biased composition (low complexity). Residues Ser925 and Ser1105 each carry the phosphoserine modification. Residues 1196 to 1234 (SEGLGDGPLVACASNGHAAGSGGHQSGADSESQEENTQL) form a disordered region. Residues 1231 to 1234 (NTQL) are interaction with SHANK2.

As to quaternary structure, interacts with LPAR2. Interacts with SHANK2. Ca(2+) serves as cofactor. Expressed in parotid gland, brain, liver, uterus, lung, heart, adrenal gland, and ovary. Not detected in spleen, pancreas, intestine, thymus or kidney.

Its subcellular location is the cytoplasm. The protein localises to the membrane. The protein resides in the nucleus. It carries out the reaction a 1,2-diacyl-sn-glycero-3-phospho-(1D-myo-inositol-4,5-bisphosphate) + H2O = 1D-myo-inositol 1,4,5-trisphosphate + a 1,2-diacyl-sn-glycerol + H(+). The catalysed reaction is a 1,2-diacyl-sn-glycero-3-phospho-(1D-myo-inositol) + H2O = 1D-myo-inositol 1-phosphate + a 1,2-diacyl-sn-glycerol + H(+). Its activity is regulated as follows. Activated by G(q)/G(11) G alpha proteins in response to ligand-binding to G protein-coupled receptors. Its function is as follows. Catalyzes the production of the second messenger molecules diacylglycerol (DAG) and inositol 1,4,5-trisphosphate (IP3). Key transducer of G protein-coupled receptor signaling: activated by G(q)/G(11) G alpha proteins downstream of G protein-coupled receptors activation. In neutrophils, participates in a phospholipase C-activating N-formyl peptide-activated GPCR (G protein-coupled receptor) signaling pathway by promoting RASGRP4 activation by DAG, to promote neutrophil functional responses. This chain is 1-phosphatidylinositol 4,5-bisphosphate phosphodiesterase beta-3, found in Rattus norvegicus (Rat).